Reading from the N-terminus, the 171-residue chain is Cyclin-dependent kinase inhibitor 2A (171 aa).

Residues 33–42 are compositionally biased toward basic and acidic residues; the sequence is ASMHTKHESE. The tract at residues 33–52 is disordered; sequence ASMHTKHESEESFSGEKLTE. 3 ANK repeats span residues 45–74, 78–106, and 111–140; these read FSGE…NPNA, FGRS…EPNT, and TLTL…RLDV.

Belongs to the CDKN2 cyclin-dependent kinase inhibitor family. In terms of assembly, heterodimer with CDK4 or CDK6. Predominamt P16 complexes contained CDK6. Interacts with CDK4 (both 'T-172'-phosphorylated and non-phosphorylated forms); the interaction inhibits cyclin D-CDK4 kinase activity. Interacts with ISCO2. Expressed predominantly in lung and testis. In the testis, restricted to germ cells in the seminiferous epithelium. Not detected in premeiotic spermatogonia but high levels found in postmeiotic spermatids. In primary tumors, low levels detected in melanocytic hyperplasias. Higher levels found in non-metastatic and metastatic melanomas.

The protein localises to the cytoplasm. It is found in the nucleus. Functionally, acts as a negative regulator of the proliferation of normal cells by interacting strongly with CDK4 and CDK6. This inhibits their ability to interact with cyclins D and to phosphorylate the retinoblastoma protein. This chain is Cyclin-dependent kinase inhibitor 2A, found in Monodelphis domestica (Gray short-tailed opossum).